The sequence spans 169 residues: Peptide deformylase 1 (169 aa).

Cys91 and His133 together coordinate Fe cation. The active site involves Glu134. His137 contributes to the Fe cation binding site.

This sequence belongs to the polypeptide deformylase family. The cofactor is Fe(2+).

The enzyme catalyses N-terminal N-formyl-L-methionyl-[peptide] + H2O = N-terminal L-methionyl-[peptide] + formate. In terms of biological role, removes the formyl group from the N-terminal Met of newly synthesized proteins. Requires at least a dipeptide for an efficient rate of reaction. N-terminal L-methionine is a prerequisite for activity but the enzyme has broad specificity at other positions. The sequence is that of Peptide deformylase 1 from Vibrio cholerae serotype O1 (strain ATCC 39315 / El Tor Inaba N16961).